A 277-amino-acid chain; its full sequence is Phosphate import ATP-binding protein PstB 2 (277 aa).

The ABC transporter domain maps to Ile31–Ile272. Gly63 to Ser70 contributes to the ATP binding site.

This sequence belongs to the ABC transporter superfamily. Phosphate importer (TC 3.A.1.7) family. In terms of assembly, the complex is composed of two ATP-binding proteins (PstB), two transmembrane proteins (PstC and PstA) and a solute-binding protein (PstS).

The protein resides in the cell inner membrane. The enzyme catalyses phosphate(out) + ATP + H2O = ADP + 2 phosphate(in) + H(+). In terms of biological role, part of the ABC transporter complex PstSACB involved in phosphate import. Responsible for energy coupling to the transport system. This Pseudomonas syringae pv. syringae (strain B728a) protein is Phosphate import ATP-binding protein PstB 2.